Reading from the N-terminus, the 117-residue chain is Putative small ubiquitin-related modifier 6 (117 aa).

The segment at 1–30 (MSTKSSSIHGRNEVKMEGEKRKDVESESTH) is disordered. Basic and acidic residues predominate over residues 10 to 28 (GRNEVKMEGEKRKDVESES). The Ubiquitin-like domain maps to 31-108 (VTLNVKGQDE…IDALLPQESG (78 aa)). Residue G108 forms a Glycyl lysine isopeptide (Gly-Lys) (interchain with K-? in acceptor proteins) linkage.

This sequence belongs to the ubiquitin family. SUMO subfamily. Interacts with SAE2, SCE1, SIZ1 and MMS21 Covalently attached to a number of proteins.

It localises to the nucleus. Its subcellular location is the cytoplasm. Its function is as follows. Ubiquitin-like protein which can be covalently attached to target lysines as a monomer. Does not seem to be involved in protein degradation and may function as an antagonist of ubiquitin in the degradation process. This Arabidopsis thaliana (Mouse-ear cress) protein is Putative small ubiquitin-related modifier 6 (SUMO6).